Reading from the N-terminus, the 891-residue chain is uncharacterized protein (891 aa).

Basic and acidic residues predominate over residues 48–64 (GHKKPRSESRKKYDAKK). Residues 48-86 (GHKKPRSESRKKYDAKKQHQSSHFATPVKGVESSEPTEK) are disordered. Residues Ser261, Ser263, Ser265, and Ser268 each carry the phosphoserine modification. The segment at 795–822 (QRTFSNESPRAVDSGFSRTSTPFSESTS) is disordered. Residues 810-822 (FSRTSTPFSESTS) show a composition bias toward polar residues.

It localises to the nucleus. This is an uncharacterized protein from Schizosaccharomyces pombe (strain 972 / ATCC 24843) (Fission yeast).